Here is a 308-residue protein sequence, read N- to C-terminus: Glutaminase 1 (308 aa).

Substrate-binding residues include serine 64, asparagine 116, glutamate 161, asparagine 168, tyrosine 192, tyrosine 244, and valine 262.

It belongs to the glutaminase family. In terms of assembly, homotetramer.

It catalyses the reaction L-glutamine + H2O = L-glutamate + NH4(+). This is Glutaminase 1 from Halalkalibacterium halodurans (strain ATCC BAA-125 / DSM 18197 / FERM 7344 / JCM 9153 / C-125) (Bacillus halodurans).